Consider the following 872-residue polypeptide: Adhesive plaque matrix protein (872 aa).

A signal peptide spans 1-20 (MEGIKLNLCLLCIFSCDIFA). Positions 21 to 41 (LSNGNIHNVYGSAYSGASAGA) are nonrepetitive linker. A run of 69 repeats spans residues 124 to 133 (YKAKTSYPPS), 134 to 143 (YKHKITYPPT), 144 to 153 (YKPKITYPPT), 154 to 163 (YKQKPSYPPS), 174 to 183 (YKPKITYPPT), 184 to 192 (YKRKPSYTP), 193 to 202 (YKPKATYPPT), 203 to 212 (YKPKITYPPT), 213 to 221 (YKRKPSYTP), 222 to 231 (YKPKTTYPPT), 232 to 241 (YKPKISYPSI), 242 to 251 (YKPKASYVSS), 252 to 261 (YKSKKTYPPT), 262 to 271 (YKPKISYPPT), 272 to 281 (YKPKPSYPPT), 282 to 291 (YKPKVTYPPT), 292 to 301 (YKPKPSYPPT), 302 to 311 (YKPKITYPPT), 312 to 321 (YKPKPSYPTP), 322 to 331 (YKQKPSYPPI), 332 to 341 (YKSKSSYPTS), 342 to 351 (YKSKKTYPPT), 352 to 361 (YKPKITYPPT), 362 to 371 (YKPKPSYPPS), 372 to 381 (YKPKKTYSPT), 382 to 391 (YKPKITYPPT), 402 to 411 (YKPKTTYPPT), 412 to 421 (YKPKISYPPT), 422 to 431 (YKPKASYVSS), 432 to 441 (YKSKKTYPPT), 442 to 451 (YKPKISYPPT), 452 to 461 (YKPKPSYPPT), 462 to 471 (YKPKITYPPT), 472 to 481 (YKPKPSYPPT), 482 to 491 (YKPKITYPPT), 502 to 511 (YKQKPSYPPI), 512 to 521 (YKSKSSYPTS), 522 to 531 (YKSKKTYPPT), 532 to 541 (YKPKITYPPT), 542 to 551 (YKPKPSYPPS), 552 to 561 (YKPKTTYPPT), 562 to 571 (YKPKIRYPPT), 572 to 581 (YKPKASYPPT), 582 to 591 (YKPKITYPPT), 602 to 611 (YKQKPSYPPI), 612 to 621 (YKSKSSYPTA), 622 to 631 (YKSKKTYPPT), 632 to 641 (YKPKITYPPT), 642 to 651 (YKPKPSYPPS), 652 to 661 (YRPKITYPPT), 662 to 671 (YKPKKSYPQA), 672 to 681 (YKSKGSYPPS), 682 to 691 (YQPKKTYPPS), 702 to 711 (YKPKISYPPT), 712 to 721 (YKTKPSYPAS), 722 to 731 (YKRKTSYPPT), 732 to 741 (YKPKISYPST), 742 to 751 (YKAKPSYPPT), 752 to 761 (YKPKPSYASS), 762 to 771 (YKPKIRYPPT), 772 to 781 (YKPKPSYASS), 782 to 791 (YKPKIRYPPT), 792 to 801 (YKPKPSYASS), 812 to 821 (YKPKPSYASS), 822 to 831 (YKPKITYPPT), 832 to 841 (YKPKISYPPT), 842 to 851 (YKPKITYPPT), 852 to 861 (YKPKISYPPA), and 862 to 871 (YKPKISYPSQ). The tract at residues 124-871 (YKAKTSYPPS…YKPKISYPSQ (748 aa)) is 69 X 10 AA tandem repeats of Y-[KRQ]-[PSTAHQR]-K-[AIPTSKGV]-[STR]-Y-[PTSVA]-[PSTQA]-[STYIPAQ]. The tract at residues 184–192 (YKRKPSYTP) is nonapeptide 1. The interval 213-221 (YKRKPSYTP) is nonapeptide 2. Composition is skewed to pro residues over residues 273–282 (KPKPSYPPTY) and 291–302 (TYKPKPSYPPTY). The segment at 273-781 (KPKPSYPPTY…YKPKPSYASS (509 aa)) is disordered. Positions 320–360 (TPYKQKPSYPPIYKSKSSYPTSYKSKKTYPPTYKPKITYPP) are enriched in low complexity. The span at 361–372 (TYKPKPSYPPSY) shows a compositional bias: pro residues. Residues 377 to 390 (TYSPTYKPKITYPP) are compositionally biased toward low complexity. Residues 391–402 (TYKPKPSYPPSY) are compositionally biased toward pro residues. A compositionally biased stretch (low complexity) spans 403–450 (KPKTTYPPTYKPKISYPPTYKPKASYVSSYKSKKTYPPTYKPKISYPP). Pro residues-rich tracts occupy residues 451 to 462 (TYKPKPSYPPTY) and 471 to 482 (TYKPKPSYPPTY). The span at 501–540 (PYKQKPSYPPIYKSKSSYPTSYKSKKTYPPTYKPKITYPP) shows a compositional bias: low complexity. Positions 541 to 552 (TYKPKPSYPPSY) are enriched in pro residues. Composition is skewed to low complexity over residues 568 to 590 (YPPT…TYPP) and 600 to 640 (TPYK…TYPP). Residues 641 to 652 (TYKPKPSYPPSY) show a composition bias toward pro residues. 2 stretches are compositionally biased toward low complexity: residues 677–690 (SYPP…TYPP) and 698–719 (YPPT…PSYP). Positions 754–763 (PKPSYASSYK) are enriched in low complexity.

In terms of processing, hydroxylated on proline (mono- or dihydroxylation) and tyrosine residues (to L-DOPA = 3',4'-dihydroxyphenylalanine) of the tandem repeats. Produced by the byssal gland.

It localises to the secreted. Provides adhesiveness to the mussel's foot. Mussels produce one of the strongest water insoluble glues. The mussel's adhesive is a bundle of threads, called a byssus, formed by a fibrous collagenous core coated with adhesive proteins. The sequence is that of Adhesive plaque matrix protein (FP1) from Mytilus coruscus (Sea mussel).